Here is a 364-residue protein sequence, read N- to C-terminus: Dihydroorotate dehydrogenase (quinone) (364 aa).

Residues 61 to 65 and T85 each bind FMN; that span reads AGFDK. K65 contacts substrate. Substrate is bound at residue 110–114; the sequence is NRMGF. The FMN site is built by N139 and N170. Residue N170 participates in substrate binding. The Nucleophile role is filled by S173. N175 provides a ligand contact to substrate. 2 residues coordinate FMN: K214 and A242. 243 to 244 contacts substrate; that stretch reads NT. Residues G266, G295, and 316-317 contribute to the FMN site; that span reads YS.

The protein belongs to the dihydroorotate dehydrogenase family. Type 2 subfamily. Monomer. FMN is required as a cofactor.

The protein resides in the cell membrane. It catalyses the reaction (S)-dihydroorotate + a quinone = orotate + a quinol. Its pathway is pyrimidine metabolism; UMP biosynthesis via de novo pathway; orotate from (S)-dihydroorotate (quinone route): step 1/1. Catalyzes the conversion of dihydroorotate to orotate with quinone as electron acceptor. The sequence is that of Dihydroorotate dehydrogenase (quinone) from Rhodopseudomonas palustris (strain BisA53).